Reading from the N-terminus, the 376-residue chain is Queuine tRNA-ribosyltransferase (376 aa).

Catalysis depends on aspartate 89, which acts as the Proton acceptor. Substrate-binding positions include 89-93, aspartate 143, glutamine 194, and glycine 221; that span reads DSGGF. The segment at 252–258 is RNA binding; sequence GVGLPSN. The Nucleophile role is filled by aspartate 271. The tract at residues 276 to 280 is RNA binding; important for wobble base 34 recognition; that stretch reads ARNGR. The Zn(2+) site is built by cysteine 309, cysteine 311, cysteine 314, and histidine 340.

It belongs to the queuine tRNA-ribosyltransferase family. As to quaternary structure, homodimer. Within each dimer, one monomer is responsible for RNA recognition and catalysis, while the other monomer binds to the replacement base PreQ1. Requires Zn(2+) as cofactor.

It carries out the reaction 7-aminomethyl-7-carbaguanine + guanosine(34) in tRNA = 7-aminomethyl-7-carbaguanosine(34) in tRNA + guanine. It participates in tRNA modification; tRNA-queuosine biosynthesis. Its function is as follows. Catalyzes the base-exchange of a guanine (G) residue with the queuine precursor 7-aminomethyl-7-deazaguanine (PreQ1) at position 34 (anticodon wobble position) in tRNAs with GU(N) anticodons (tRNA-Asp, -Asn, -His and -Tyr). Catalysis occurs through a double-displacement mechanism. The nucleophile active site attacks the C1' of nucleotide 34 to detach the guanine base from the RNA, forming a covalent enzyme-RNA intermediate. The proton acceptor active site deprotonates the incoming PreQ1, allowing a nucleophilic attack on the C1' of the ribose to form the product. After dissociation, two additional enzymatic reactions on the tRNA convert PreQ1 to queuine (Q), resulting in the hypermodified nucleoside queuosine (7-(((4,5-cis-dihydroxy-2-cyclopenten-1-yl)amino)methyl)-7-deazaguanosine). The protein is Queuine tRNA-ribosyltransferase of Clostridium tetani (strain Massachusetts / E88).